Consider the following 62-residue polypeptide: UPF0434 protein RL4569 (62 aa).

The protein belongs to the UPF0434 family.

The chain is UPF0434 protein RL4569 from Rhizobium johnstonii (strain DSM 114642 / LMG 32736 / 3841) (Rhizobium leguminosarum bv. viciae).